Here is a 124-residue protein sequence, read N- to C-terminus: Small ribosomal subunit protein uS12 (124 aa).

A disordered region spans residues 1-30 (MPTIQQLVRKGRTPKVTKTKAPALKANPQQ). The segment covering 9-18 (RKGRTPKVTK) has biased composition (basic residues).

It belongs to the universal ribosomal protein uS12 family. Part of the 30S ribosomal subunit. Contacts proteins S8 and S17. May interact with IF1 in the 30S initiation complex.

Its function is as follows. With S4 and S5 plays an important role in translational accuracy. In terms of biological role, interacts with and stabilizes bases of the 16S rRNA that are involved in tRNA selection in the A site and with the mRNA backbone. Located at the interface of the 30S and 50S subunits, it traverses the body of the 30S subunit contacting proteins on the other side and probably holding the rRNA structure together. The combined cluster of proteins S8, S12 and S17 appears to hold together the shoulder and platform of the 30S subunit. The protein is Small ribosomal subunit protein uS12 of Leifsonia xyli subsp. xyli (strain CTCB07).